Reading from the N-terminus, the 121-residue chain is Small ribosomal subunit protein bS6 (121 aa).

The protein belongs to the bacterial ribosomal protein bS6 family.

Functionally, binds together with bS18 to 16S ribosomal RNA. The polypeptide is Small ribosomal subunit protein bS6 (rpsF) (Rickettsia prowazekii (strain Madrid E)).